The sequence spans 342 residues: MIFVDACLKKPTPYTPVWMMRQAGRYLPEYMAVRERAGDFLSLCKDYKKASAVTIQPVEILGVDAAILFSDILVVPLEMGMGLRFEKGEGPVFDRPVKTAGDLAVLDVDRAVKNLSYVYDTIALTRENLARDKALIGFCGAPWTIATYMIEGGGTKTYAVCKKLLYTNPEFLHQILAKVTAALTDYVKAQIRAGVDAVQIFDSWAGALEESAYFEFGWRYILQIVDSVKTEFPDIPLIVFPKGVSGFLDKISGNFEVFGVDWSTPIGLAKEKLSPKFVLQGNMEPTRLYSKKAIDAGVDKILNTMKGAPHIFNLGHGILPDIPVENAKYFIKQVQEKSHNHK.

Residues 21 to 25 (RQAGR), Asp-71, Tyr-148, Ser-203, and His-316 each bind substrate.

It belongs to the uroporphyrinogen decarboxylase family. In terms of assembly, homodimer.

The protein localises to the cytoplasm. It carries out the reaction uroporphyrinogen III + 4 H(+) = coproporphyrinogen III + 4 CO2. It functions in the pathway porphyrin-containing compound metabolism; protoporphyrin-IX biosynthesis; coproporphyrinogen-III from 5-aminolevulinate: step 4/4. In terms of biological role, catalyzes the decarboxylation of four acetate groups of uroporphyrinogen-III to yield coproporphyrinogen-III. This chain is Uroporphyrinogen decarboxylase, found in Campylobacter curvus (strain 525.92).